The chain runs to 561 residues: Putative transport protein YbjL (561 aa).

A run of 5 helical transmembrane segments spans residues 8-28, 32-52, 66-86, 94-114, and 158-178; these read LLNGNYILLLFVVLALGLCLG, LGSIQLGNSIGVLVVSLLLGQ, FMLFIFCVGVEAGPNFFSIFF, MLALVMVGSALVIALGLGKLF, and NLSLGYALTYLIGLVSLIVGA. RCK C-terminal domains follow at residues 200 to 288 and 292 to 373; these read RGLD…SFRN and VFDR…RIGF. 5 consecutive transmembrane segments (helical) span residues 383–403, 406–426, 451–471, 475–495, and 540–560; these read LLAFCAFFVIGLMIGMITFQF, FSFGMGNAAGLLFAGIMLGFM, VFMAGVGLSAGSGINNGLGAI, MLIAGLIVSLVPVVICFLFGA, and AIANVLLTLAGTIIVMVWPGL.

It belongs to the AAE transporter (TC 2.A.81) family. YbjL subfamily.

The protein resides in the cell membrane. The sequence is that of Putative transport protein YbjL from Escherichia coli O139:H28 (strain E24377A / ETEC).